Here is a 321-residue protein sequence, read N- to C-terminus: Calcium-binding protein LPS1-alpha (321 aa).

8 EF-hand domains span residues 15 to 49 (DAIE…NWTE), 47 to 82 (WTEE…STKE), 85 to 120 (YSSD…IYTK), 121 to 156 (VVDG…KLPI), 165 to 200 (EYRE…STKY), 200 to 233 (YSDK…DGVS), 232 to 267 (VSKD…IYRQ), and 269 to 304 (VDFE…NCPY). Residues Asp-29, Asn-31, Asp-33, Thr-35, Glu-40, Asp-60, Asn-62, Asp-64, His-66, Glu-71, Asp-98, Asp-100, Asn-102, Arg-104, Glu-109, Asp-134, Asp-136, Asp-138, His-140, Glu-145, Asp-178, Asn-180, Asp-182, Ser-184, Glu-189, Asp-213, Asn-215, Asp-217, Arg-219, Glu-224, Asp-245, Asp-247, Asn-249, Lys-251, Glu-256, Asp-284, Asp-286, Tyr-288, and Glu-293 each coordinate Ca(2+).

As to expression, aboral ectoderm, a squamous epithelium covering the surface of the late stage embryo and larva.

In terms of biological role, calcium-binding protein involved in larval development and metamorphosis. Likely to function as calcium buffers mediating the transport of calcium from the sea water to the blastocoel where calcium is required for skeleton formation. This Lytechinus pictus (Painted sea urchin) protein is Calcium-binding protein LPS1-alpha.